The following is a 394-amino-acid chain: 1-deoxy-D-xylulose 5-phosphate reductoisomerase (394 aa).

Residues Thr-10, Gly-11, Ser-12, Ile-13, Gly-38, Arg-39, Asn-40, and Asn-123 each contribute to the NADPH site. A 1-deoxy-D-xylulose 5-phosphate-binding site is contributed by Lys-124. Glu-125 contributes to the NADPH binding site. Asp-149 serves as a coordination point for Mn(2+). 4 residues coordinate 1-deoxy-D-xylulose 5-phosphate: Ser-150, Glu-151, Ser-175, and His-198. Glu-151 provides a ligand contact to Mn(2+). An NADPH-binding site is contributed by Gly-204. Residues Ser-211, Asn-216, Lys-217, and Glu-220 each coordinate 1-deoxy-D-xylulose 5-phosphate. Glu-220 is a Mn(2+) binding site.

It belongs to the DXR family. It depends on Mg(2+) as a cofactor. Requires Mn(2+) as cofactor.

The enzyme catalyses 2-C-methyl-D-erythritol 4-phosphate + NADP(+) = 1-deoxy-D-xylulose 5-phosphate + NADPH + H(+). The protein operates within isoprenoid biosynthesis; isopentenyl diphosphate biosynthesis via DXP pathway; isopentenyl diphosphate from 1-deoxy-D-xylulose 5-phosphate: step 1/6. Catalyzes the NADPH-dependent rearrangement and reduction of 1-deoxy-D-xylulose-5-phosphate (DXP) to 2-C-methyl-D-erythritol 4-phosphate (MEP). This is 1-deoxy-D-xylulose 5-phosphate reductoisomerase from Cereibacter sphaeroides (strain ATCC 17023 / DSM 158 / JCM 6121 / CCUG 31486 / LMG 2827 / NBRC 12203 / NCIMB 8253 / ATH 2.4.1.) (Rhodobacter sphaeroides).